The primary structure comprises 75 residues: Parvalbumin beta 3 (75 aa).

N-acetylalanine is present on alanine 1. One can recognise an EF-hand domain in the interval tyrosine 26–glycine 61. Residues aspartate 39, aspartate 41, serine 43, phenylalanine 45, glutamate 47, and glutamate 50 each coordinate Ca(2+).

Belongs to the parvalbumin family.

Functionally, in muscle, parvalbumin is thought to be involved in relaxation after contraction. It binds two calcium ions. In Merluccius gayi (South Pacific hake), this protein is Parvalbumin beta 3.